An 83-amino-acid polypeptide reads, in one-letter code: Transmembrane protein EP84R (83 aa).

2 helical membrane-spanning segments follow: residues valine 31–leucine 51 and alanine 59–tyrosine 79.

This sequence belongs to the asfivirus EP84R family.

It localises to the virion membrane. This is Transmembrane protein EP84R from Ornithodoros (relapsing fever ticks).